The following is a 177-amino-acid chain: Phycocyanin PC645 beta subunit (177 aa).

Residue tyrosine 18 coordinates mesobiliverdin. (2R,3E)-phycocyanobilin contacts are provided by lysine 28, asparagine 35, and aspartate 39. Cysteine 50, aspartate 54, and cysteine 61 together coordinate 15,16-dihydrobiliverdin. 5 residues coordinate (2R,3E)-phycocyanobilin: asparagine 72, arginine 77, cysteine 82, arginine 84, and aspartate 85. Residue glutamine 148 coordinates 15,16-dihydrobiliverdin. 3 residues coordinate (2R,3E)-phycocyanobilin: proline 154, glycine 156, and cysteine 158.

This sequence belongs to the phycobiliprotein family. As to quaternary structure, heterotetramer of 2 different alpha chains and 2 identical beta chains which form 2 alpha-beta heterodimers within the heterotetramer. Post-translationally, contains two phycocyanobilin chromophores, one mesobiliverdin chromophore and one 15,16-dihydrobiliverdin chromophore with binding mediated by both the alpha and beta subunits.

It is found in the plastid. The protein localises to the chloroplast thylakoid membrane. Light-harvesting photosynthetic tetrapyrrole chromophore-protein from the phycobiliprotein complex. This Chroomonas sp. (strain CCMP270) protein is Phycocyanin PC645 beta subunit.